Consider the following 329-residue polypeptide: T-cell acute lymphocytic leukemia protein 1 homolog (329 aa).

Disordered stretches follow at residues 1–28, 40–78, and 91–125; these read MTER…RMAP, ETSR…KGRD, and TELC…SPPA. Position 12 is a phosphoserine (serine 12). Gly residues predominate over residues 58–70; sequence SGAGGGPASGGGA. The segment covering 96-106 has biased composition (pro residues); sequence PPGPAPAPAPA. At serine 122 the chain carries Phosphoserine; by MAPK. Serine 172 carries the post-translational modification Phosphoserine. Positions 187-239 constitute a bHLH domain; that stretch reads VRRIFTNSRERWRQQNVNGAFAELRKLIPTHPPDKKLSKNEILRLAMKYINFL. Positions 247 to 329 are disordered; sequence EEEGTQRAKP…LPAADGAGPR (83 aa). Residues 263 to 273 show a composition bias toward gly residues; the sequence is GAGGGGAGGGI. Over residues 317–329 the composition is skewed to low complexity; the sequence is PALLPAADGAGPR.

In terms of assembly, efficient DNA binding requires dimerization with another bHLH protein. Forms heterodimers with TCF3. Binds to the LIM domain containing protein LMO2 and to DRG1. Can assemble in a complex with LDB1 and LMO2. Component of a TAL-1 complex composed at least of CBFA2T3, LDB1, TAL1 and TCF3. Interacts with SBNO2; this interaction inhibits TAL1 occupancy of the DCSTAMP promoter, leading to the activation of the DCSTAMP promoter by the transcription factor MITF. In terms of processing, phosphorylated on serine residues. Phosphorylation of Ser-122 by MAPK is strongly stimulated by hypoxia. Ubiquitinated; subsequent to hypoxia-dependent phosphorylation of Ser-122, ubiquitination targets the protein for rapid degradation via the ubiquitin system. This process may be characteristic for microvascular endothelial cells, since it could not be observed in large vessel endothelial cells. Erythroid and myeloid cells.

Its subcellular location is the nucleus. In terms of biological role, implicated in the genesis of hemopoietic malignancies. It may play an important role in hemopoietic differentiation. Serves as a positive regulator of erythroid differentiation. In Mus musculus (Mouse), this protein is T-cell acute lymphocytic leukemia protein 1 homolog (Tal1).